Reading from the N-terminus, the 235-residue chain is Sugar fermentation stimulation protein homolog (235 aa).

It belongs to the SfsA family.

The polypeptide is Sugar fermentation stimulation protein homolog (Photorhabdus laumondii subsp. laumondii (strain DSM 15139 / CIP 105565 / TT01) (Photorhabdus luminescens subsp. laumondii)).